A 585-amino-acid polypeptide reads, in one-letter code: PiggyBac transposable element-derived protein 4 (585 aa).

Residues 1 to 73 (MSNPRKRSIP…STSSDSGRSM (73 aa)) are disordered. Over residues 25–40 (DSFDESDFSEIDDSDN) the composition is skewed to acidic residues. The span at 47-61 (EADKIRPLSHLESDG) shows a compositional bias: basic and acidic residues. Positions 62–72 (KSSTSSDSGRS) are enriched in low complexity.

The protein is PiggyBac transposable element-derived protein 4 (PGBD4) of Homo sapiens (Human).